A 323-amino-acid polypeptide reads, in one-letter code: MSDGAAARRWGKCGPPCSRESIMVAFKGVWTQAFWKAVTAEFLAMLIFVLLSVGSTINWGGSENPLPVDMVLISLCFGLSIATMVQCFGHISGGHINPAVTVAMVCTRKISIAKSVFYITAQCLGAIIGAGILYLVTPPSVVGGLGVTTVHGNLTAGHGLLVELIITFQLVFTIFASCDSKRTDVTGSVALAIGFSVAIGHLFAINYTGASMNPARSFGPAVIMGNWENHWIYWVGPIIGAVLAGALYEYVFCPDVELKRRLKEAFSKAAQQTKGSYMEVEDNRSQVETEDLILKPGVVHVIDIDRGDEKKGKDSSGEVLSSV.

The Cytoplasmic portion of the chain corresponds to 1-36 (MSDGAAARRWGKCGPPCSRESIMVAFKGVWTQAFWK). Residues Cys13 and Cys17 are each lipidated (S-palmitoyl cysteine). The helical transmembrane segment at 37–57 (AVTAEFLAMLIFVLLSVGSTI) threads the bilayer. The Extracellular portion of the chain corresponds to 58 to 69 (NWGGSENPLPVD). A helical transmembrane segment spans residues 70 to 89 (MVLISLCFGLSIATMVQCFG). Topologically, residues 90–93 (HISG) are cytoplasmic. The discontinuously helical intramembrane region spans 94 to 101 (GHINPAVT). The NPA 1 signature appears at 97-99 (NPA). Residues 102 to 115 (VAMVCTRKISIAKS) lie on the Cytoplasmic side of the membrane. At Ser111 the chain carries Phosphoserine; by PKG. Residues 116 to 136 (VFYITAQCLGAIIGAGILYLV) form a helical membrane-spanning segment. The Extracellular segment spans residues 137-155 (TPPSVVGGLGVTTVHGNLT). Asn153 is a glycosylation site (N-linked (GlcNAc...) asparagine). A helical transmembrane segment spans residues 156–176 (AGHGLLVELIITFQLVFTIFA). Residues 177–184 (SCDSKRTD) are Cytoplasmic-facing. Ser180 is modified (phosphoserine; by PKC). A helical membrane pass occupies residues 185–205 (VTGSVALAIGFSVAIGHLFAI). At 206 to 208 (NYT) the chain is on the extracellular side. Residues 209–222 (GASMNPARSFGPAV) constitute an intramembrane region (discontinuously helical). The NPA 2 motif lies at 213–215 (NPA). Residues 223 to 231 (IMGNWENHW) are Extracellular-facing. The chain crosses the membrane as a helical span at residues 232-252 (IYWVGPIIGAVLAGALYEYVF). The Cytoplasmic segment spans residues 253 to 323 (CPDVELKRRL…DSSGEVLSSV (71 aa)). Phosphoserine is present on residues Ser276 and Ser285. A Phosphothreonine modification is found at Thr289. At Ser321 the chain carries Phosphoserine.

It belongs to the MIP/aquaporin (TC 1.A.8) family. As to quaternary structure, homotetramer. The tetramers can form oligomeric arrays in membranes. The size of the oligomers differs between tissues and is smaller in skeletal muscle than in brain. Interaction between AQP4 oligomeric arrays in close-by cells can contribute to cell-cell adhesion. Part of a complex containing MLC1, TRPV4, HEPACAM and ATP1B1. Phosphorylation by PKC at Ser-180 promotes internalization from the cell membrane, reducing the conductance by 50%. Phosphorylation by PKG at Ser-111 in response to glutamate increases conductance by 40%. In terms of processing, isoform Long: Palmitoylated on its N-terminal region. Isoform 3: Not palmitoylated. As to expression, detected in cerebellum. Detected on pericapillary astrocyte endfeet in cerebellum, and in skeletal muscle. Detected in glial lamellae in the hypothalamus (at protein level). Abundant in mature brain cortex, cerebellum and spinal cord. Highly expressed in the ependymal cell lining the aqueductal system and over the space of the brain in contact with the subarachnoid space. Detected in paraventricular and supraoptic nuclei, the granule cell layer of the dentate gyrus and the Purkinje cell layer in the cerebellum. Only weakly detectable in eye, kidney, intestine, and lung.

Its subcellular location is the cell membrane. It localises to the basolateral cell membrane. The protein localises to the endosome membrane. It is found in the sarcolemma. The protein resides in the cell projection. The catalysed reaction is H2O(in) = H2O(out). Its function is as follows. Forms a water-specific channel. Plays an important role in brain water homeostasis and in glymphatic solute transport. Required for a normal rate of water exchange across the blood brain interface. Required for normal levels of cerebrospinal fluid influx into the brain cortex and parenchyma along paravascular spaces that surround penetrating arteries, and for normal drainage of interstitial fluid along paravenous drainage pathways. Thereby, it is required for normal clearance of solutes from the brain interstitial fluid, including soluble beta-amyloid peptides derived from APP. Plays a redundant role in urinary water homeostasis and urinary concentrating ability. The polypeptide is Aquaporin-4 (Aqp4) (Rattus norvegicus (Rat)).